The chain runs to 317 residues: tRNA dimethylallyltransferase (317 aa).

19 to 26 contacts ATP; it reads GPTASGKS. 21-26 lines the substrate pocket; that stretch reads TASGKS. Residues 49–52 are interaction with substrate tRNA; that stretch reads DSAQ.

This sequence belongs to the IPP transferase family. In terms of assembly, monomer. Mg(2+) is required as a cofactor.

The enzyme catalyses adenosine(37) in tRNA + dimethylallyl diphosphate = N(6)-dimethylallyladenosine(37) in tRNA + diphosphate. Catalyzes the transfer of a dimethylallyl group onto the adenine at position 37 in tRNAs that read codons beginning with uridine, leading to the formation of N6-(dimethylallyl)adenosine (i(6)A). This is tRNA dimethylallyltransferase from Erythrobacter litoralis (strain HTCC2594).